The chain runs to 309 residues: 4-hydroxy-tetrahydrodipicolinate synthase (309 aa).

Thr-51 provides a ligand contact to pyruvate. Tyr-140 (proton donor/acceptor) is an active-site residue. Lys-168 (schiff-base intermediate with substrate) is an active-site residue. Ile-209 is a binding site for pyruvate.

Belongs to the DapA family. In terms of assembly, homotetramer; dimer of dimers.

It is found in the cytoplasm. It carries out the reaction L-aspartate 4-semialdehyde + pyruvate = (2S,4S)-4-hydroxy-2,3,4,5-tetrahydrodipicolinate + H2O + H(+). It participates in amino-acid biosynthesis; L-lysine biosynthesis via DAP pathway; (S)-tetrahydrodipicolinate from L-aspartate: step 3/4. Its function is as follows. Catalyzes the condensation of (S)-aspartate-beta-semialdehyde [(S)-ASA] and pyruvate to 4-hydroxy-tetrahydrodipicolinate (HTPA). The polypeptide is 4-hydroxy-tetrahydrodipicolinate synthase (Streptococcus uberis (strain ATCC BAA-854 / 0140J)).